The following is a 108-amino-acid chain: Tubulin-specific chaperone A (108 aa).

Ala2 bears the N-acetylalanine mark.

This sequence belongs to the TBCA family. Supercomplex made of cofactors A to E. Cofactors A and D function by capturing and stabilizing tubulin in a quasi-native conformation. Cofactor E binds to the cofactor D-tubulin complex; interaction with cofactor C then causes the release of tubulin polypeptides that are committed to the native state.

The protein resides in the cytoplasm. It localises to the cytoskeleton. Functionally, tubulin-folding protein; involved in the early step of the tubulin folding pathway. This is Tubulin-specific chaperone A (TBCA) from Gallus gallus (Chicken).